The primary structure comprises 400 residues: Dual specificity mitogen-activated protein kinase kinase 2 (400 aa).

An N-acetylmethionine modification is found at Met1. Residue Ser23 is modified to Phosphoserine. In terms of domain architecture, Protein kinase spans 72 to 369 (FERISELGAG…LKMLTNHTFI (298 aa)). ATP is bound by residues 78-86 (LGAGNGGVV) and Lys101. Asp194 serves as the catalytic Proton acceptor. Residues Ser222 and Ser226 each carry the (Microbial infection) O-acetylserine; by Yersinia YopJ; alternate modification. Ser222 bears the Phosphoserine; by RAF; alternate mark. Ser226 bears the Phosphoserine; alternate mark. The segment at 286 to 310 (GEEGEPHSISPRPRPPGRPVSGHGM) is disordered. A phosphoserine mark is found at Ser293, Ser295, and Ser306. Phosphothreonine is present on residues Thr394 and Thr396.

The protein belongs to the protein kinase superfamily. STE Ser/Thr protein kinase family. MAP kinase kinase subfamily. In terms of assembly, interacts with MORG1. Interacts with SGK1. Interacts with KSR1. Interacts with KSR1 and BRAF; the interaction with KSR1 mediates KSR1-BRAF dimerization. Interacts with GLS. The cofactor is Mg(2+). In terms of processing, MAPKK is itself dependent on Ser/Thr phosphorylation for activity catalyzed by MAP kinase kinase kinases (RAF or MEKK1). Phosphorylated by MAP2K1/MEK1. Post-translationally, (Microbial infection) Acetylation of Ser-222 and Ser-226 by Yersinia YopJ prevents phosphorylation and activation, thus blocking the MAPK signaling pathway.

The protein localises to the cytoplasm. The protein resides in the membrane. The enzyme catalyses L-seryl-[protein] + ATP = O-phospho-L-seryl-[protein] + ADP + H(+). It carries out the reaction L-threonyl-[protein] + ATP = O-phospho-L-threonyl-[protein] + ADP + H(+). It catalyses the reaction L-tyrosyl-[protein] + ATP = O-phospho-L-tyrosyl-[protein] + ADP + H(+). Its function is as follows. Catalyzes the concomitant phosphorylation of a threonine and a tyrosine residue in a Thr-Glu-Tyr sequence located in MAP kinases. Activates the ERK1 and ERK2 MAP kinases. Activates BRAF in a KSR1 or KSR2-dependent manner; by binding to KSR1 or KSR2 releases the inhibitory intramolecular interaction between KSR1 or KSR2 protein kinase and N-terminal domains which promotes KSR1 or KSR2-BRAF dimerization and BRAF activation. The chain is Dual specificity mitogen-activated protein kinase kinase 2 (MAP2K2) from Homo sapiens (Human).